A 184-amino-acid polypeptide reads, in one-letter code: ADP-ribosylation factor-like protein 3 (184 aa).

Residue Gly2 is the site of N-myristoyl glycine attachment. GTP contacts are provided by residues 24 to 31 (GLDNAGKT), 68 to 72 (DIGGQ), and 127 to 130 (NKQD).

It belongs to the small GTPase superfamily. Arf family.

It localises to the golgi apparatus. Functionally, GTP-binding protein that may be involved in protein trafficking; may modulate vesicle budding and uncoating within the Golgi apparatus. The polypeptide is ADP-ribosylation factor-like protein 3 (arl-3) (Caenorhabditis elegans).